Consider the following 367-residue polypeptide: Aminomethyltransferase (367 aa).

This sequence belongs to the GcvT family. In terms of assembly, the glycine cleavage system is composed of four proteins: P, T, L and H.

It catalyses the reaction N(6)-[(R)-S(8)-aminomethyldihydrolipoyl]-L-lysyl-[protein] + (6S)-5,6,7,8-tetrahydrofolate = N(6)-[(R)-dihydrolipoyl]-L-lysyl-[protein] + (6R)-5,10-methylene-5,6,7,8-tetrahydrofolate + NH4(+). Its function is as follows. The glycine cleavage system catalyzes the degradation of glycine. The protein is Aminomethyltransferase of Lysinibacillus sphaericus (strain C3-41).